The primary structure comprises 559 residues: MARTTSQLYDAVPIQSSVVLCSCPSPSMVRSQTEPSSSPGIPSGVSRQGSTMDGTTAEARPSTNPLQQHPAQLPPQPRKKRPEDFKFGKILGEGSFSTVVLARELATSREYAIKILEKRHIIKENKVPYVTRERDVMSRLDHPFFVKLYFTFQDDEKLYFGLSYAKNGELLKYIRKIGSFDETCTRFYTAEIVSALEYLHGKGIIHRDLKPENILLNEDMHIQITDFGTAKVLSPDSKQARANSFVGTAQYVSPELLTEKSACKSSDLWALGCIIYQLVAGLPPFRAGNEYLIFQKIIKLEYDFPEKFFPKARDLVEKLLVLDATKRLGCEEMEGYGPLKAHPFFESITWENLHQQTPPKLTAYLPAMSEDDEDCYGNYDNLLSQFGCMQVSSSSSSHSLSAVDASLPQRSGSNIEQYIHDLDTNSFELDLQFSEDEKRLLLEKQAGGNPWHQFVENNLILKMGPVDKRKGLFARRRQLLLTEGPHLYYVDPVNKVLKGEIPWSQELRPEAKNFKTFFVHTPNRTYYLMDPSGNAHKWCRKIQEVWRQQYQSSPDAAVQ.

Phosphotyrosine; by SRC and INSR is present on Y9. At S25 the chain carries Phosphoserine. The interval 25-83 (SPSMVRSQTEPSSSPGIPSGVSRQGSTMDGTTAEARPSTNPLQQHPAQLPPQPRKKRPE) is disordered. Residues 35–46 (PSSSPGIPSGVS) are compositionally biased toward low complexity. One can recognise a Protein kinase domain in the interval 85–345 (FKFGKILGEG…YGPLKAHPFF (261 aa)). Residues 95–97 (SFS) and K114 contribute to the ATP site. The tract at residues 116–160 (LEKRHIIKENKVPYVTRERDVMSRLDHPFFVKLYFTFQDDEKLYF) is PIF-pocket. ATP contacts are provided by residues 163–165 (SYA) and E169. D208 functions as the Proton acceptor in the catalytic mechanism. E212 and D226 together coordinate ATP. Position 244 is a phosphoserine (S244). K307 is modified (N6-acetyllysine). The residue at position 357 (T357) is a Phosphothreonine; by MELK. Residues Y376 and Y379 each carry the phosphotyrosine; by SRC and INSR modification. Residue S396 is modified to Phosphoserine. A Phosphoserine; by MAP3K5 modification is found at S397. S399 is modified (phosphoserine). S401 is modified (phosphoserine; by MAP3K5). S413 is modified (phosphoserine). A PH domain is found at 462 to 553 (KMGPVDKRKG…EVWRQQYQSS (92 aa)). S504 is subject to Phosphoserine; by PKC/PRKCQ. T516 carries the post-translational modification Phosphothreonine; by autocatalysis. S532 is modified (phosphoserine; by PKC/PRKCQ).

It belongs to the protein kinase superfamily. AGC Ser/Thr protein kinase family. PDPK1 subfamily. In terms of assembly, homodimer in its autoinhibited state. Active as monomer. Interacts with NPRL2, PPARG, PAK1, PTK2B, GRB14, PKN1 (via C-terminus), STRAP and IKKB. The Tyr-9 phosphorylated form interacts with SRC, RASA1 and CRK (via their SH2 domains). Interacts with SGK3 in a phosphorylation-dependent manner. The tyrosine-phosphorylated form interacts with PTPN6. The Ser-244 phosphorylated form interacts with YWHAH and YWHAQ. Binds INSR in response to insulin. Interacts (via PH domain) with SMAD3, SMAD4 and SMAD7. Interacts with PKN2; the interaction stimulates PDPK1 autophosphorylation, its PI(3,4,5)P3-dependent kinase activity toward 'Ser-473' of AKT1 but also activates its kinase activity toward PRKCD and PRKCZ. In terms of processing, phosphorylation on Ser-244 in the activation loop is required for full activity. PDPK1 itself can autophosphorylate Ser-244, leading to its own activation. Autophosphorylation is inhibited by the apoptotic C-terminus cleavage product of PKN2. Tyr-9 phosphorylation is critical for stabilization of both PDPK1 and the PDPK1/SRC complex via HSP90-mediated protection of PDPK1 degradation. Angiotensin II stimulates the tyrosine phosphorylation of PDPK1 in vascular smooth muscle in a calcium- and SRC-dependent manner. Phosphorylated on Tyr-9, Tyr-376 and Tyr-379 by INSR in response to insulin. Palmitate negatively regulates autophosphorylation at Ser-244 and palmitate-induced phosphorylation at Ser-532 and Ser-504 by PKC/PRKCQ negatively regulates its ability to phosphorylate PKB/AKT1. Phosphorylation at Thr-357 by MELK partially inhibits kinase activity, the inhibition is cooperatively enhanced by phosphorylation at Ser-397 and Ser-401 by MAP3K5. Monoubiquitinated in the kinase domain, deubiquitinated by USP4.

Its subcellular location is the cytoplasm. The protein resides in the nucleus. It localises to the cell membrane. The protein localises to the cell junction. It is found in the focal adhesion. The catalysed reaction is L-seryl-[protein] + ATP = O-phospho-L-seryl-[protein] + ADP + H(+). It catalyses the reaction L-threonyl-[protein] + ATP = O-phospho-L-threonyl-[protein] + ADP + H(+). With respect to regulation, homodimerization regulates its activity by maintaining the kinase in an autoinhibitory conformation. NPRL2 down-regulates its activity by interfering with tyrosine phosphorylation at the Tyr-9, Tyr-376 and Tyr-379 residues. The 14-3-3 protein YWHAQ acts as a negative regulator by association with the residues surrounding the Ser-244 residue. STRAP positively regulates its activity by enhancing its autophosphorylation and by stimulating its dissociation from YWHAQ. SMAD2, SMAD3, SMAD4 and SMAD7 also positively regulate its activity by stimulating its dissociation from YWHAQ. Activated by phosphorylation on Tyr-9, Tyr-376 and Tyr-379 by INSR in response to insulin. Serine/threonine kinase which acts as a master kinase, phosphorylating and activating a subgroup of the AGC family of protein kinases. Its targets include: protein kinase B (PKB/AKT1, PKB/AKT2, PKB/AKT3), p70 ribosomal protein S6 kinase (RPS6KB1), p90 ribosomal protein S6 kinase (RPS6KA1, RPS6KA2 and RPS6KA3), cyclic AMP-dependent protein kinase (PRKACA), protein kinase C (PRKCD and PRKCZ), serum and glucocorticoid-inducible kinase (SGK1, SGK2 and SGK3), p21-activated kinase-1 (PAK1), TSSK3, protein kinase PKN (PKN1 and PKN2). Plays a central role in the transduction of signals from insulin by providing the activating phosphorylation to PKB/AKT1, thus propagating the signal to downstream targets controlling cell proliferation and survival, as well as glucose and amino acid uptake and storage. Negatively regulates the TGF-beta-induced signaling by: modulating the association of SMAD3 and SMAD7 with TGF-beta receptor, phosphorylating SMAD2, SMAD3, SMAD4 and SMAD7, preventing the nuclear translocation of SMAD3 and SMAD4 and the translocation of SMAD7 from the nucleus to the cytoplasm in response to TGF-beta. Activates PPARG transcriptional activity and promotes adipocyte differentiation. Activates the NF-kappa-B pathway via phosphorylation of IKKB. The tyrosine phosphorylated form is crucial for the regulation of focal adhesions by angiotensin II. Controls proliferation, survival, and growth of developing pancreatic cells. Participates in the regulation of Ca(2+) entry and Ca(2+)-activated K(+) channels of mast cells. Essential for the motility of vascular endothelial cells (ECs) and is involved in the regulation of their chemotaxis. Plays a critical role in cardiac homeostasis by serving as a dual effector for cell survival and beta-adrenergic response. Plays an important role during thymocyte development by regulating the expression of key nutrient receptors on the surface of pre-T cells and mediating Notch-induced cell growth and proliferative responses. Provides negative feedback inhibition to toll-like receptor-mediated NF-kappa-B activation in macrophages. The chain is 3-phosphoinositide-dependent protein kinase 1 (Pdpk1) from Rattus norvegicus (Rat).